A 218-amino-acid polypeptide reads, in one-letter code: Small ribosomal subunit protein uS3c (218 aa).

The region spanning 47–118 is the KH type-2 domain; it reads VQKNMKTSSG…KLNIAITRIE (72 aa).

Belongs to the universal ribosomal protein uS3 family. Part of the 30S ribosomal subunit.

It localises to the plastid. It is found in the chloroplast. This chain is Small ribosomal subunit protein uS3c (rps3), found in Lactuca sativa (Garden lettuce).